We begin with the raw amino-acid sequence, 348 residues long: Guanosine ABC transporter permease protein NupP (348 aa).

9 helical membrane passes run 8 to 28, 61 to 81, 85 to 105, 107 to 127, 136 to 156, 189 to 209, 237 to 257, 277 to 297, and 320 to 340; these read LLVPLIAIILGLAAGALIMLV, YILSGLAVAFAFRTGLFNIGV, LLVGWTAAVWVGTAFDGPAYI, LPLALITAAAAGGLWGFIPGI, EVIVTIMMNYIALHMTNYIIS, LHLGIIVALLAAVIMWFIINK, IMTSMLISGAFAGLAGAMEGL, IAVALLGGNTAVGVVLAACLL, and IVIAIIILFVASSYAIRFVMG.

It belongs to the binding-protein-dependent transport system permease family. The complex is composed of two ATP-binding proteins (NupO), two transmembrane proteins (NupP and NupQ) and a solute-binding protein (NupN).

Its subcellular location is the cell membrane. In terms of biological role, part of an ABC transporter complex involved in the uptake of guanosine. Responsible for the translocation of the substrate across the membrane. May be a nucleoside transporter of broad specificity but with various affinities for different substrates. The protein is Guanosine ABC transporter permease protein NupP of Bacillus subtilis (strain 168).